A 422-amino-acid polypeptide reads, in one-letter code: Glutamate 2,3-aminomutase (422 aa).

In terms of domain architecture, Radical SAM core spans 150–371; the sequence is RRYPDRLIIN…AIPTYIVNAP (222 aa). [4Fe-4S] cluster is bound by residues Cys-164, Cys-168, and Cys-171. An N6-(pyridoxal phosphate)lysine modification is found at Lys-376.

Belongs to the radical SAM superfamily. Pyridoxal 5'-phosphate serves as cofactor. It depends on [4Fe-4S] cluster as a cofactor.

It catalyses the reaction L-glutamate = 3-aminopentanedioate. Catalyzes the interconversion of L-glutamate and L-beta-glutamate. Does not have L-lysine 2,3-aminomutase activity. The protein is Glutamate 2,3-aminomutase (eam) of Clostridioides difficile (strain 630) (Peptoclostridium difficile).